A 251-amino-acid chain; its full sequence is Probable transcriptional regulatory protein MLBr00475 (251 aa).

This sequence belongs to the TACO1 family.

It is found in the cytoplasm. The polypeptide is Probable transcriptional regulatory protein MLBr00475 (Mycobacterium leprae (strain Br4923)).